Reading from the N-terminus, the 376-residue chain is tRNA-specific 2-thiouridylase MnmA (376 aa).

ATP-binding positions include 19–26 and M45; that span reads GMSGGVDS. The interaction with target base in tRNA stretch occupies residues 105–107; the sequence is NPD. C110 (nucleophile) is an active-site residue. C110 and C210 are oxidised to a cystine. Position 134 (G134) interacts with ATP. The tract at residues 160 to 162 is interaction with tRNA; sequence KDQ. C210 functions as the Cysteine persulfide intermediate in the catalytic mechanism. Positions 326 to 327 are interaction with tRNA; the sequence is RY.

It belongs to the MnmA/TRMU family.

It localises to the cytoplasm. It carries out the reaction S-sulfanyl-L-cysteinyl-[protein] + uridine(34) in tRNA + AH2 + ATP = 2-thiouridine(34) in tRNA + L-cysteinyl-[protein] + A + AMP + diphosphate + H(+). In terms of biological role, catalyzes the 2-thiolation of uridine at the wobble position (U34) of tRNA, leading to the formation of s(2)U34. The chain is tRNA-specific 2-thiouridylase MnmA from Bordetella petrii (strain ATCC BAA-461 / DSM 12804 / CCUG 43448).